A 454-amino-acid chain; its full sequence is Bifunctional protein GlmU (454 aa).

A pyrophosphorylase region spans residues 1–228; that stretch reads MNKCAIILAA…FEETLGVNSR (228 aa). UDP-N-acetyl-alpha-D-glucosamine-binding positions include 8-11, K22, Q73, and 78-79; these read LAAG and GT. D103 contacts Mg(2+). Residues G140, E154, N169, and N226 each contribute to the UDP-N-acetyl-alpha-D-glucosamine site. N226 contacts Mg(2+). The linker stretch occupies residues 229-249; sequence AELAKVESIMRNRINRTHLDN. Positions 250 to 454 are N-acetyltransferase; that stretch reads GVTIIDPLNT…EGWVERKKLK (205 aa). R331 and K349 together coordinate UDP-N-acetyl-alpha-D-glucosamine. The Proton acceptor role is filled by H361. UDP-N-acetyl-alpha-D-glucosamine is bound by residues Y364 and N375. Acetyl-CoA-binding positions include 384 to 385, A421, and R438; that span reads NY.

In the N-terminal section; belongs to the N-acetylglucosamine-1-phosphate uridyltransferase family. This sequence in the C-terminal section; belongs to the transferase hexapeptide repeat family. As to quaternary structure, homotrimer. It depends on Mg(2+) as a cofactor.

Its subcellular location is the cytoplasm. It carries out the reaction alpha-D-glucosamine 1-phosphate + acetyl-CoA = N-acetyl-alpha-D-glucosamine 1-phosphate + CoA + H(+). The catalysed reaction is N-acetyl-alpha-D-glucosamine 1-phosphate + UTP + H(+) = UDP-N-acetyl-alpha-D-glucosamine + diphosphate. It participates in nucleotide-sugar biosynthesis; UDP-N-acetyl-alpha-D-glucosamine biosynthesis; N-acetyl-alpha-D-glucosamine 1-phosphate from alpha-D-glucosamine 6-phosphate (route II): step 2/2. It functions in the pathway nucleotide-sugar biosynthesis; UDP-N-acetyl-alpha-D-glucosamine biosynthesis; UDP-N-acetyl-alpha-D-glucosamine from N-acetyl-alpha-D-glucosamine 1-phosphate: step 1/1. Its pathway is bacterial outer membrane biogenesis; LPS lipid A biosynthesis. Its function is as follows. Catalyzes the last two sequential reactions in the de novo biosynthetic pathway for UDP-N-acetylglucosamine (UDP-GlcNAc). The C-terminal domain catalyzes the transfer of acetyl group from acetyl coenzyme A to glucosamine-1-phosphate (GlcN-1-P) to produce N-acetylglucosamine-1-phosphate (GlcNAc-1-P), which is converted into UDP-GlcNAc by the transfer of uridine 5-monophosphate (from uridine 5-triphosphate), a reaction catalyzed by the N-terminal domain. The chain is Bifunctional protein GlmU from Clostridium perfringens (strain SM101 / Type A).